Here is a 289-residue protein sequence, read N- to C-terminus: Nucleotide-binding protein MS1718 (289 aa).

Residue 8-15 coordinates ATP; it reads GRSGAGKS. A GTP-binding site is contributed by 56 to 59; it reads DIRN.

This sequence belongs to the RapZ-like family.

Displays ATPase and GTPase activities. This is Nucleotide-binding protein MS1718 from Mannheimia succiniciproducens (strain KCTC 0769BP / MBEL55E).